A 389-amino-acid chain; its full sequence is MNNSKGWILSLSINAFCVFGASGIYLDKLVNKWFGYEVLDLANSDNALVTGLATSSGILLYSSWASVMQESFHFLEKISMFDTFLVRVFQFCAFFFGGIVFYIFNHFLHKWLHESSQTGFLHDHFSVSDPSPSTAQNHRSPPASCKRLSSCESSGSPSSRVVGSLQGSYCPSGTHLHEGSLLLEDSSARHSSDSVHEYLVKKPSNCDCECHAHFSSFPTHSGTPDDIEHIHSVYTMGIQTALLICLHKVPEGFITFLASTVDTGFMVLVAMSIHNIVEGFTIAYPLYLAWKSRPKAFLTAATLSSCSLPLGSLIAFLVMEAGGIGSSDFLNFLYGIIFAGTAGMMLILSLRVILPEALRHDHSENKRHSFICFTIGILFTLFLEIFDSH.

The next 7 helical transmembrane spans lie at 6 to 26, 48 to 68, 88 to 108, 267 to 289, 305 to 325, 329 to 349, and 368 to 388; these read GWILSLSINAFCVFGASGIYL, LVTGLATSSGILLYSSWASVM, VFQFCAFFFGGIVFYIFNHFL, VLVAMSIHNIVEGFTIAYPLYLA, SCSLPLGSLIAFLVMEAGGIG, FLNFLYGIIFAGTAGMMLILS, and HSFICFTIGILFTLFLEIFDS.

The protein belongs to the ZIP transporter (TC 2.A.5) family.

It localises to the endoplasmic reticulum membrane. Probable zinc transporter that may mediate zinc remobilization from the endoplasmic reticulum under zinc limitation. The sequence is that of Probable zinc transporter zip2 (zip2) from Schizosaccharomyces pombe (strain 972 / ATCC 24843) (Fission yeast).